The following is a 566-amino-acid chain: Putative pentatricopeptide repeat-containing protein At1g28020 (566 aa).

PPR repeat units follow at residues 136–171 (GDSV…GLLL), 172–206 (RPVP…DVEA), 207–242 (DNVT…GIKL), 243–273 (EWHT…TEQL), 279–309 (LKSA…YKSK), 314–348 (DNNG…PLEF), 349–385 (DHRI…RMNK), 468–504 (DYSV…NVDP), and 505–540 (DLIT…GIKL).

It belongs to the PPR family. P subfamily.

This chain is Putative pentatricopeptide repeat-containing protein At1g28020, found in Arabidopsis thaliana (Mouse-ear cress).